A 411-amino-acid polypeptide reads, in one-letter code: MGMRARVPKVAHSTRRPPAARMWLPRFSSKTVTVLLLAQTTCLLLFIISRPGPSSPAGGEDRVHVLVLSSWRSGSSFLGQLFSQHPDVFYLMEPAWHVWTTLSQGSAATLHMAVRDLMRSIFLCDMDVFDAYMPQSRNLSAFFNWATSRALCSPPACSAFPRGTISKQDVCKTLCTRQPFSLAREACRSYSHVVLKEVRFFNLQVLYPLLSDPALNLRIVHLVRDPRAVLRSREAAGPILARDNGIVLGTNGKWVEADPHLRLIREVCRSHVRIAEAATLKPPPFLRGRYRLVRFEDLAREPLAEIRALYAFTGLTLTPQLEAWIHNITHGSGIGKPIEAFHTSSRNARNVSQAWRHALPFTKILRVQEVCAGALQLLGYRPVYSADQQRDLTLDLVLPRGPDHFSWASPD.

At 1–30 the chain is on the cytoplasmic side; that stretch reads MGMRARVPKVAHSTRRPPAARMWLPRFSSK. Residues 31–48 form a helical; Signal-anchor for type II membrane protein membrane-spanning segment; sequence TVTVLLLAQTTCLLLFII. Topologically, residues 49-411 are lumenal; sequence SRPGPSSPAG…PDHFSWASPD (363 aa). 71-77 lines the 3'-phosphoadenylyl sulfate pocket; that stretch reads WRSGSSF. N-linked (GlcNAc...) asparagine glycosylation is present at N138. 224–232 provides a ligand contact to 3'-phosphoadenylyl sulfate; sequence RDPRAVLRS. 2 N-linked (GlcNAc...) asparagine glycosylation sites follow: N327 and N350.

The protein belongs to the sulfotransferase 1 family. Gal/GlcNAc/GalNAc subfamily. Predominantly expressed in small and large intestines and colon. Weakly expressed in lymphocytes. Not expressed in other tissues. Down-regulated in colonic adenocarcinomas.

It localises to the golgi apparatus membrane. In terms of biological role, sulfotransferase that utilizes 3'-phospho-5'-adenylyl sulfate (PAPS) as sulfonate donor to catalyze the transfer of sulfate to position 6 of non-reducing N-acetylglucosamine (GlcNAc) residues and O-linked sugars of mucin-type acceptors. Acts on the non-reducing terminal GlcNAc of short carbohydrate substrates. However, it does not transfer sulfate to longer carbohydrate substrates that have poly-N-acetyllactosamine structures. Has no activity toward keratan. Not involved in generating HEV-expressed ligands for SELL. Its substrate specificity may be influenced by its subcellular location. The chain is Carbohydrate sulfotransferase 5 (CHST5) from Homo sapiens (Human).